The chain runs to 1126 residues: NUT family member 1 (1126 aa).

Disordered regions lie at residues 1 to 56, 334 to 367, 475 to 515, 537 to 559, 664 to 692, 755 to 810, and 932 to 1014; these read MASD…PVFS, IPKK…IPPE, EDAQ…QGAA, QEQT…SPSS, AGML…DDRG, ALNS…GPGL, and GEGR…EELS. Residues 30–55 show a composition bias toward pro residues; it reads FAPPPPVPPDQPLWEPSPQPPIPPVF. Over residues 338–353 the composition is skewed to basic residues; that stretch reads AASKTRAPRRRQRKPQ. Residues 962-975 show a composition bias toward polar residues; that stretch reads KLTNGQGQGSTSPR. Ser-973 is modified (phosphoserine). Positions 987 to 1005 are enriched in basic and acidic residues; that stretch reads TPIKEKCTSADRAKRRETE. Ser-1022, Ser-1025, and Ser-1027 each carry phosphoserine. The tract at residues 1032–1126 is disordered; it reads PLSTRQASGG…SKRKKRRRSQ (95 aa). The residue at position 1042 (Gln-1042) is an N5-methylglutamine. Basic residues predominate over residues 1106–1126; the sequence is PRKRRRDGFVTSKRKKRRRSQ.

The protein belongs to the NUT family. Methylated at Gln-1042 by N6AMT1. Post-translationally, phosphorylation on Ser-1022, Ser-1025 or Ser-1027 is important for cytoplasmic export.

The protein resides in the cytoplasm. The protein localises to the nucleus. Functionally, plays a role in the regulation of proliferation. Regulates TERT expression by modulating SP1 binding to TERT promoter binding sites. The polypeptide is NUT family member 1 (Mus musculus (Mouse)).